Consider the following 173-residue polypeptide: Crossover junction endodeoxyribonuclease RuvC (173 aa).

Catalysis depends on residues Asp8, Glu67, and Asp139. Residues Asp8, Glu67, and Asp139 each contribute to the Mg(2+) site.

Belongs to the RuvC family. Homodimer which binds Holliday junction (HJ) DNA. The HJ becomes 2-fold symmetrical on binding to RuvC with unstacked arms; it has a different conformation from HJ DNA in complex with RuvA. In the full resolvosome a probable DNA-RuvA(4)-RuvB(12)-RuvC(2) complex forms which resolves the HJ. Mg(2+) serves as cofactor.

The protein localises to the cytoplasm. It catalyses the reaction Endonucleolytic cleavage at a junction such as a reciprocal single-stranded crossover between two homologous DNA duplexes (Holliday junction).. In terms of biological role, the RuvA-RuvB-RuvC complex processes Holliday junction (HJ) DNA during genetic recombination and DNA repair. Endonuclease that resolves HJ intermediates. Cleaves cruciform DNA by making single-stranded nicks across the HJ at symmetrical positions within the homologous arms, yielding a 5'-phosphate and a 3'-hydroxyl group; requires a central core of homology in the junction. The consensus cleavage sequence is 5'-(A/T)TT(C/G)-3'. Cleavage occurs on the 3'-side of the TT dinucleotide at the point of strand exchange. HJ branch migration catalyzed by RuvA-RuvB allows RuvC to scan DNA until it finds its consensus sequence, where it cleaves and resolves the cruciform DNA. This Pectobacterium carotovorum subsp. carotovorum (strain PC1) protein is Crossover junction endodeoxyribonuclease RuvC.